The sequence spans 124 residues: uncharacterized protein (124 aa).

It belongs to the asfivirus H124R family.

It localises to the virion. This is an uncharacterized protein from Ornithodoros (relapsing fever ticks).